A 1317-amino-acid polypeptide reads, in one-letter code: DNA-directed RNA polymerase subunit beta' (1317 aa).

Residues cysteine 60, cysteine 62, cysteine 75, and cysteine 78 each contribute to the Zn(2+) site. Mg(2+) contacts are provided by aspartate 535, aspartate 537, and aspartate 539. Zn(2+)-binding residues include cysteine 890, cysteine 967, cysteine 974, and cysteine 977.

The protein belongs to the RNA polymerase beta' chain family. The RNAP catalytic core consists of 2 alpha, 1 beta, 1 beta' and 1 omega subunit. When a sigma factor is associated with the core the holoenzyme is formed, which can initiate transcription. Requires Mg(2+) as cofactor. It depends on Zn(2+) as a cofactor.

It catalyses the reaction RNA(n) + a ribonucleoside 5'-triphosphate = RNA(n+1) + diphosphate. In terms of biological role, DNA-dependent RNA polymerase catalyzes the transcription of DNA into RNA using the four ribonucleoside triphosphates as substrates. The sequence is that of DNA-directed RNA polymerase subunit beta' from Mycolicibacterium smegmatis (strain ATCC 700084 / mc(2)155) (Mycobacterium smegmatis).